The sequence spans 430 residues: Glutamine synthetase leaf isozyme, chloroplastic (430 aa).

Residues 1–49 constitute a chloroplast transit peptide; the sequence is MAQILAPSTQWQMRITKTSPCATPITSKMWSSLVMKQTKKVAHSAKFRV. The GS beta-grasp domain maps to 77–157; the sequence is IIAEYIWIGG…VVCDAYTPAG (81 aa). Residues 99–119 are disordered; it reads SKPVSHPSEVPKWNYDGSSTG. Residues 161 to 430 form the GS catalytic domain; it reads PTNKRHRAAE…LAAQKIALKV (270 aa).

It belongs to the glutamine synthetase family. As to quaternary structure, homooctamer.

The protein localises to the plastid. Its subcellular location is the chloroplast. The catalysed reaction is L-glutamate + NH4(+) + ATP = L-glutamine + ADP + phosphate + H(+). The light-modulated chloroplast enzyme, encoded by a nuclear gene and expressed primarily in leaves, is responsible for the reassimilation of the ammonia generated by photorespiration. This Pisum sativum (Garden pea) protein is Glutamine synthetase leaf isozyme, chloroplastic (GS2).